Here is a 343-residue protein sequence, read N- to C-terminus: Glyceraldehyde-3-phosphate dehydrogenase (343 aa).

NAD(+) is bound by residues 12–13 (SI) and Gly-114. 143-145 (SCN) serves as a coordination point for D-glyceraldehyde 3-phosphate. Catalysis depends on Cys-144, which acts as the Nucleophile. Arg-172 contributes to the NAD(+) binding site. 198-199 (HG) is a D-glyceraldehyde 3-phosphate binding site. Gln-307 provides a ligand contact to NAD(+).

This sequence belongs to the glyceraldehyde-3-phosphate dehydrogenase family. In terms of assembly, homotetramer.

The protein resides in the cytoplasm. It carries out the reaction D-glyceraldehyde 3-phosphate + phosphate + NADP(+) = (2R)-3-phospho-glyceroyl phosphate + NADPH + H(+). It catalyses the reaction D-glyceraldehyde 3-phosphate + phosphate + NAD(+) = (2R)-3-phospho-glyceroyl phosphate + NADH + H(+). It functions in the pathway carbohydrate degradation; glycolysis; pyruvate from D-glyceraldehyde 3-phosphate: step 1/5. This chain is Glyceraldehyde-3-phosphate dehydrogenase (gap), found in Methanocaldococcus jannaschii (strain ATCC 43067 / DSM 2661 / JAL-1 / JCM 10045 / NBRC 100440) (Methanococcus jannaschii).